The following is a 195-amino-acid chain: 3-isopropylmalate dehydratase small subunit (195 aa).

It belongs to the LeuD family. LeuD type 1 subfamily. Heterodimer of LeuC and LeuD.

It catalyses the reaction (2R,3S)-3-isopropylmalate = (2S)-2-isopropylmalate. It functions in the pathway amino-acid biosynthesis; L-leucine biosynthesis; L-leucine from 3-methyl-2-oxobutanoate: step 2/4. Catalyzes the isomerization between 2-isopropylmalate and 3-isopropylmalate, via the formation of 2-isopropylmaleate. The protein is 3-isopropylmalate dehydratase small subunit of Thermobifida fusca (strain YX).